Here is a 320-residue protein sequence, read N- to C-terminus: Cytochrome f (320 aa).

An N-terminal signal peptide occupies residues 1 to 35 (MQTKNTFSWIKKEIIRSISVSLMIYIIARTSISNA). 4 residues coordinate heme: Tyr36, Cys56, Cys59, and His60. The chain crosses the membrane as a helical span at residues 286-306 (VQGLLFFLASVILAQIFLVLK).

It belongs to the cytochrome f family. In terms of assembly, the 4 large subunits of the cytochrome b6-f complex are cytochrome b6, subunit IV (17 kDa polypeptide, petD), cytochrome f and the Rieske protein, while the 4 small subunits are PetG, PetL, PetM and PetN. The complex functions as a dimer. The cofactor is heme.

It is found in the plastid. Its subcellular location is the chloroplast thylakoid membrane. Component of the cytochrome b6-f complex, which mediates electron transfer between photosystem II (PSII) and photosystem I (PSI), cyclic electron flow around PSI, and state transitions. The polypeptide is Cytochrome f (Eucalyptus globulus subsp. globulus (Tasmanian blue gum)).